A 364-amino-acid polypeptide reads, in one-letter code: MGILTLNVEEKIKIISKNTAEIVTIDELRKKLEENQKLKGYIGFEPSGLFHIGWLIWAQKLKDLVDVGVDMSILVATWHAWINDKLGGNLDKIKLAGQYAIEVLNAYGVDMSKVRIVYAEDLVKDSNYWALVIRIAKNTSLARMKRALTIMGRKAEEAELDTSKLIYPAMQVADILYQDLDIALGGTDQRKAHMLARDVSDKLGKKKVIAIHTPLLIGLQGGQRMEGVEEDDYLASVKMSKSKPETAIFVHDPPEVVEAKLRSAYCPKGVVIDNPVLQINKYIIFAKDNATLKVERDIKYGGDIEFKSYEELEKIYSEGKLHPLDLKLATARKLNEILDPIRKKLESKTEFTLLVEELEKGVTR.

L-tyrosine contacts are provided by Tyr-41, Tyr-167, Gln-171, Asp-174, and Gln-189. A 'KMSKS' region motif is present at residues 238-242; that stretch reads KMSKS. Residue Lys-241 coordinates ATP.

This sequence belongs to the class-I aminoacyl-tRNA synthetase family. TyrS type 4 subfamily. As to quaternary structure, homodimer.

The protein resides in the cytoplasm. It carries out the reaction tRNA(Tyr) + L-tyrosine + ATP = L-tyrosyl-tRNA(Tyr) + AMP + diphosphate + H(+). Catalyzes the attachment of tyrosine to tRNA(Tyr) in a two-step reaction: tyrosine is first activated by ATP to form Tyr-AMP and then transferred to the acceptor end of tRNA(Tyr). This chain is Tyrosine--tRNA ligase, found in Sulfurisphaera tokodaii (strain DSM 16993 / JCM 10545 / NBRC 100140 / 7) (Sulfolobus tokodaii).